Here is a 706-residue protein sequence, read N- to C-terminus: Elongation factor G (706 aa).

The tr-type G domain occupies 8–295; that stretch reads ELYRNFGIMA…AVIDYLPSPL (288 aa). Residues 17–24, 92–96, and 146–149 each bind GTP; these read AHIDAGKT, DTPGH, and NKMD.

The protein belongs to the TRAFAC class translation factor GTPase superfamily. Classic translation factor GTPase family. EF-G/EF-2 subfamily.

Its subcellular location is the cytoplasm. Catalyzes the GTP-dependent ribosomal translocation step during translation elongation. During this step, the ribosome changes from the pre-translocational (PRE) to the post-translocational (POST) state as the newly formed A-site-bound peptidyl-tRNA and P-site-bound deacylated tRNA move to the P and E sites, respectively. Catalyzes the coordinated movement of the two tRNA molecules, the mRNA and conformational changes in the ribosome. The sequence is that of Elongation factor G from Ruegeria sp. (strain TM1040) (Silicibacter sp.).